Here is a 187-residue protein sequence, read N- to C-terminus: Large ribosomal subunit protein uL13 (187 aa).

This sequence belongs to the universal ribosomal protein uL13 family.

In Dictyostelium discoideum (Social amoeba), this protein is Large ribosomal subunit protein uL13 (rpl13a).